The chain runs to 179 residues: ATP synthase subunit delta (179 aa).

The protein belongs to the ATPase delta chain family. F-type ATPases have 2 components, F(1) - the catalytic core - and F(0) - the membrane proton channel. F(1) has five subunits: alpha(3), beta(3), gamma(1), delta(1), epsilon(1). F(0) has three main subunits: a(1), b(2) and c(10-14). The alpha and beta chains form an alternating ring which encloses part of the gamma chain. F(1) is attached to F(0) by a central stalk formed by the gamma and epsilon chains, while a peripheral stalk is formed by the delta and b chains.

Its subcellular location is the cell inner membrane. Functionally, f(1)F(0) ATP synthase produces ATP from ADP in the presence of a proton or sodium gradient. F-type ATPases consist of two structural domains, F(1) containing the extramembraneous catalytic core and F(0) containing the membrane proton channel, linked together by a central stalk and a peripheral stalk. During catalysis, ATP synthesis in the catalytic domain of F(1) is coupled via a rotary mechanism of the central stalk subunits to proton translocation. This protein is part of the stalk that links CF(0) to CF(1). It either transmits conformational changes from CF(0) to CF(1) or is implicated in proton conduction. This Acidithiobacillus ferrooxidans (strain ATCC 23270 / DSM 14882 / CIP 104768 / NCIMB 8455) (Ferrobacillus ferrooxidans (strain ATCC 23270)) protein is ATP synthase subunit delta.